We begin with the raw amino-acid sequence, 597 residues long: Elongation factor 4 (597 aa).

Residues 2-184 enclose the tr-type G domain; sequence KNIRNFSIIA…EIVAKIPAPA (183 aa). GTP-binding positions include 14-19 and 131-134; these read DHGKST and NKID.

This sequence belongs to the TRAFAC class translation factor GTPase superfamily. Classic translation factor GTPase family. LepA subfamily.

It is found in the cell inner membrane. The enzyme catalyses GTP + H2O = GDP + phosphate + H(+). In terms of biological role, required for accurate and efficient protein synthesis under certain stress conditions. May act as a fidelity factor of the translation reaction, by catalyzing a one-codon backward translocation of tRNAs on improperly translocated ribosomes. Back-translocation proceeds from a post-translocation (POST) complex to a pre-translocation (PRE) complex, thus giving elongation factor G a second chance to translocate the tRNAs correctly. Binds to ribosomes in a GTP-dependent manner. The sequence is that of Elongation factor 4 from Neisseria meningitidis serogroup A / serotype 4A (strain DSM 15465 / Z2491).